Consider the following 93-residue polypeptide: MTKSELIANLVAQYPSLSVKSVDESVKEILEQIMGSLEQGERIEVRGFGSFSLHYRQPRVGRNPKTGESVKLDAKYVPHFKAGKELKERVDLA.

It belongs to the bacterial histone-like protein family. In terms of assembly, heterodimer of an alpha and a beta chain.

Its function is as follows. This protein is one of the two subunits of integration host factor, a specific DNA-binding protein that functions in genetic recombination as well as in transcriptional and translational control. The protein is Integration host factor subunit beta of Glaesserella parasuis serovar 5 (strain SH0165) (Haemophilus parasuis).